The primary structure comprises 128 residues: Glycine cleavage system H protein (128 aa).

Residues serine 24–lysine 105 form the Lipoyl-binding domain. Lysine 65 carries the N6-lipoyllysine modification.

Belongs to the GcvH family. As to quaternary structure, the glycine cleavage system is composed of four proteins: P, T, L and H. (R)-lipoate serves as cofactor.

Its function is as follows. The glycine cleavage system catalyzes the degradation of glycine. The H protein shuttles the methylamine group of glycine from the P protein to the T protein. The polypeptide is Glycine cleavage system H protein (Aromatoleum aromaticum (strain DSM 19018 / LMG 30748 / EbN1) (Azoarcus sp. (strain EbN1))).